We begin with the raw amino-acid sequence, 87 residues long: Acylphosphatase (87 aa).

The region spanning 2–87 is the Acylphosphatase-like domain; sequence RLTALVSGTV…ATGLRDFHVY (86 aa). Residues Arg-17 and Asn-35 contribute to the active site.

This sequence belongs to the acylphosphatase family.

It carries out the reaction an acyl phosphate + H2O = a carboxylate + phosphate + H(+). The polypeptide is Acylphosphatase (acyP) (Deinococcus geothermalis (strain DSM 11300 / CIP 105573 / AG-3a)).